A 113-amino-acid polypeptide reads, in one-letter code: Large ribosomal subunit protein eL33 (113 aa).

The protein belongs to the eukaryotic ribosomal protein eL33 family.

The protein is Large ribosomal subunit protein eL33 (RPL35A) of Tetrahymena thermophila (strain SB210).